We begin with the raw amino-acid sequence, 448 residues long: Methylenetetrahydrofolate--tRNA-(uracil-5-)-methyltransferase TrmFO (448 aa).

Residue 13–18 (GAGLAG) participates in FAD binding.

Belongs to the MnmG family. TrmFO subfamily. The cofactor is FAD.

The protein resides in the cytoplasm. It catalyses the reaction uridine(54) in tRNA + (6R)-5,10-methylene-5,6,7,8-tetrahydrofolate + NADH + H(+) = 5-methyluridine(54) in tRNA + (6S)-5,6,7,8-tetrahydrofolate + NAD(+). The enzyme catalyses uridine(54) in tRNA + (6R)-5,10-methylene-5,6,7,8-tetrahydrofolate + NADPH + H(+) = 5-methyluridine(54) in tRNA + (6S)-5,6,7,8-tetrahydrofolate + NADP(+). Catalyzes the folate-dependent formation of 5-methyl-uridine at position 54 (M-5-U54) in all tRNAs. In Streptococcus pyogenes serotype M4 (strain MGAS10750), this protein is Methylenetetrahydrofolate--tRNA-(uracil-5-)-methyltransferase TrmFO.